We begin with the raw amino-acid sequence, 558 residues long: MAKKVAVIGAGVSGLSSIKCCVDEDLEPTCFERSDDIGGLWKFTESSKDGMTRVYKSLVTNVCKEMSCYSDFPFHEDYPNFMNHEKFWDYLQEFAEHFDLLKYIQFKTTVCSITKRPDFSETGQWDVVTETEGKQNRAVFDAVMVCTGHFLNPHLPLEAFPGIHKFKGQILHSQEYKIPEGFQGKRVLVIGLGNTGGDIAVELSRTAAQVLLSTRTGTWVLGRSSDWGYPYNMMVTRRCCSFIAQVLPSRFLNWIQERKLNKRFNHEDYGLSITKGKKAKFIVNDELPNCILCGAITMKTSVIEFTETSAVFEDGTVEENIDVVIFTTGYTFSFPFFEEPLKSLCTKKIFLYKQVFPLNLERATLAIIGLIGLKGSILSGTELQARWVTRVFKGLCKIPPSQKLMMEATEKEQLIKRGVFKDTSKDKFDYIAYMDDIAACIGTKPSIPLLFLKDPRLAWEVFFGPCTPYQYRLMGPGKWDGARNAILTQWDRTLKPLKTRIVPDSSKPASMSHYLKAWGAPVLLASLLLICKSSLFLKLVRDKLQDRMSPYLVSLWRG.

Residues Gly9–Ser13, Glu32, and Leu40–Trp41 contribute to the FAD site. NADP(+) is bound by residues Thr60–Asn61 and Thr195–Asp198. The helical transmembrane segment at Ala517 to Leu537 threads the bilayer.

The protein belongs to the FMO family. FAD serves as cofactor. As to expression, liver.

It localises to the microsome membrane. It is found in the endoplasmic reticulum membrane. The enzyme catalyses N,N-dimethylaniline + NADPH + O2 + H(+) = N,N-dimethylaniline N-oxide + NADP(+) + H2O. Functionally, this protein is involved in the oxidative metabolism of a variety of xenobiotics such as drugs and pesticides. This chain is Dimethylaniline monooxygenase [N-oxide-forming] 4 (FMO4), found in Homo sapiens (Human).